The following is a 344-amino-acid chain: Anthranilate phosphoribosyltransferase (344 aa).

5-phospho-alpha-D-ribose 1-diphosphate contacts are provided by residues Gly-85, 88-89 (GD), Thr-93, 95-98 (NIST), 113-121 (KHGNRSVSS), and Ser-125. Gly-85 lines the anthranilate pocket. Position 97 (Ser-97) interacts with Mg(2+). Asn-116 is an anthranilate binding site. Arg-171 is an anthranilate binding site. Mg(2+)-binding residues include Asp-229 and Glu-230.

This sequence belongs to the anthranilate phosphoribosyltransferase family. Homodimer. Mg(2+) is required as a cofactor.

It carries out the reaction N-(5-phospho-beta-D-ribosyl)anthranilate + diphosphate = 5-phospho-alpha-D-ribose 1-diphosphate + anthranilate. Its pathway is amino-acid biosynthesis; L-tryptophan biosynthesis; L-tryptophan from chorismate: step 2/5. In terms of biological role, catalyzes the transfer of the phosphoribosyl group of 5-phosphorylribose-1-pyrophosphate (PRPP) to anthranilate to yield N-(5'-phosphoribosyl)-anthranilate (PRA). In Shewanella amazonensis (strain ATCC BAA-1098 / SB2B), this protein is Anthranilate phosphoribosyltransferase.